Consider the following 329-residue polypeptide: Prostaglandin reductase 1 (329 aa).

Residue threonine 18 is modified to Phosphothreonine. The residue at position 20 (serine 20) is a Phosphoserine. NADP(+) is bound by residues 152-155, lysine 178, tyrosine 193, asparagine 217, 239-245, 270-272, and asparagine 321; these read GAVG, CGAISVY, and FVV. The residue at position 178 (lysine 178) is an N6-(2-hydroxyisobutyryl)lysine; alternate. Lysine 178 carries the N6-acetyllysine; alternate modification.

Belongs to the NADP-dependent oxidoreductase L4BD family. As to quaternary structure, monomer or homodimer.

It localises to the cytoplasm. The catalysed reaction is 13,14-dihydro-15-oxo-prostaglandin E1 + NADP(+) = 15-oxoprostaglandin E1 + NADPH + H(+). It catalyses the reaction 13,14-dihydro-15-oxo-prostaglandin E2 + NADP(+) = 15-oxoprostaglandin E2 + NADPH + H(+). It carries out the reaction 13,14-dihydro-15-oxo-prostaglandin F1alpha + NADP(+) = 15-oxoprostaglandin F1alpha + NADPH + H(+). The enzyme catalyses 13,14-dihydro-15-oxo-PGF2alpha + NADP(+) = 15-oxoprostaglandin F2alpha + NADPH + H(+). The catalysed reaction is leukotriene B4 + NADP(+) = 12-oxo-leukotriene B4 + NADPH + H(+). It catalyses the reaction 20-hydroxy-leukotriene B4 + NADP(+) = 12-oxo-20-hydroxy-leukotriene B4 + NADPH + H(+). It carries out the reaction 6-trans-leukotriene B4 + NADP(+) = 12-oxo-(5S)-hydroxy-(6E,8E,10E,14Z)-eicosatetraenoate + NADPH + H(+). The enzyme catalyses (5S,12S)-dihydroxy-(6E,10E,12E,14Z)-eicosatetraenoate + NADP(+) = 12-oxo-(5S)-hydroxy-(6E,8E,10E,14Z)-eicosatetraenoate + NADPH + H(+). The catalysed reaction is an n-alkanal + NADP(+) = an alk-2-enal + NADPH + H(+). It catalyses the reaction hexanal + NADP(+) = (E)-hex-2-enal + NADPH + H(+). It carries out the reaction octanal + NADP(+) = (2E)-octenal + NADPH + H(+). The enzyme catalyses decanal + NADP(+) = (2E)-decenal + NADPH + H(+). The catalysed reaction is dodecanal + NADP(+) = (2E)-dodecenal + NADPH + H(+). It catalyses the reaction 4-hydroxynonanal + NADP(+) = (E)-4-hydroxynon-2-enal + NADPH + H(+). It carries out the reaction pentan-2-one + NADP(+) = (E)-pent-3-en-2-one + NADPH + H(+). The enzyme catalyses nonan-2-one + NADP(+) = (3E)-nonen-2-one + NADPH + H(+). Its function is as follows. NAD(P)H-dependent oxidoreductase involved in metabolic inactivation of pro- and anti-inflammatory eicosanoids: prostaglandins (PG), leukotrienes (LT) and lipoxins (LX). Catalyzes with high efficiency the reduction of the 13,14 double bond of 15-oxoPGs, including 15-oxo-PGE1, 15-oxo-PGE2, 15-oxo-PGF1-alpha and 15-oxo-PGF2-alpha. Catalyzes with lower efficiency the oxidation of the hydroxyl group at C12 of LTB4 and its derivatives, converting them into biologically less active 12-oxo-LTB4 metabolites. Reduces 15-oxo-LXA4 to 13,14 dihydro-15-oxo-LXA4, enhancing neutrophil recruitment at the inflammatory site. Plays a role in metabolic detoxification of alkenals and ketones. Reduces alpha,beta-unsaturated alkenals and ketones, particularly those with medium-chain length, showing highest affinity toward (2E)-decenal and (3E)-3-nonen-2-one. May inactivate 4-hydroxy-2-nonenal, a cytotoxic lipid constituent of oxidized low-density lipoprotein particles. This chain is Prostaglandin reductase 1 (PTGR1), found in Bos taurus (Bovine).